Here is a 135-residue protein sequence, read N- to C-terminus: Protein NrdI (135 aa).

Belongs to the NrdI family.

In terms of biological role, probably involved in ribonucleotide reductase function. In Pectobacterium carotovorum subsp. carotovorum (strain PC1), this protein is Protein NrdI.